The primary structure comprises 196 residues: CAG pathogenicity island protein 13 (196 aa).

The protein is CAG pathogenicity island protein 13 (cagS) of Helicobacter pylori (strain ATCC 700392 / 26695) (Campylobacter pylori).